Consider the following 411-residue polypeptide: BRO1 domain-containing protein BROX (411 aa).

One can recognise a BRO1 domain in the interval 90–395 (FKWTDTLQGN…PKKEEEVKPM (306 aa)). Positions 362 to 411 (TSQWSPETHTGFDLTKRPKDDSAKPKKEEEVKPMKEPDIKPQKDSGCQIS) are disordered. Over residues 375-404 (LTKRPKDDSAKPKKEEEVKPMKEPDIKPQK) the composition is skewed to basic and acidic residues. Residue C408 is modified to Cysteine methyl ester. A lipid anchor (S-farnesyl cysteine) is attached at C408. Positions 409–411 (QIS) are cleaved as a propeptide — removed in mature form.

Belongs to the BROX family. Farnesylation is required for nuclear envelope localization.

The protein resides in the nucleus membrane. Nuclear envelope-associated factor that is involved in the nuclear envelope ruptures during interphase (NERDI) repair. The protein is BRO1 domain-containing protein BROX of Xenopus tropicalis (Western clawed frog).